Consider the following 208-residue polypeptide: Bacitracin transport permease protein BCRB (208 aa).

A run of 6 helical transmembrane segments spans residues Leu23–Asn43, Val70–Phe90, Phe111–Leu131, Tyr135–Thr155, Ala159–Pro179, and Tyr182–Phe202.

It localises to the cell membrane. Part of the binding-protein-dependent transport system for bacitracin that confer resistance to this antibiotic; probably responsible for the translocation of the substrate across the membrane. This chain is Bacitracin transport permease protein BCRB (bcrB), found in Bacillus licheniformis.